The chain runs to 261 residues: UPF0246 protein Reut_A1014 (261 aa).

It belongs to the UPF0246 family.

In Cupriavidus pinatubonensis (strain JMP 134 / LMG 1197) (Cupriavidus necator (strain JMP 134)), this protein is UPF0246 protein Reut_A1014.